The primary structure comprises 289 residues: GTPase Era (289 aa).

The Era-type G domain occupies 2–167; sequence KSGFVSLIGR…LREIAKLLPE (166 aa). The interval 10–17 is G1; the sequence is GRTNAGKS. 10–17 is a binding site for GTP; it reads GRTNAGKS. The segment at 36 to 40 is G2; that stretch reads NATRR. The tract at residues 57-60 is G3; sequence DTPG. Residues 57 to 61 and 116 to 119 contribute to the GTP site; these read DTPGL and TKTD. The G4 stretch occupies residues 116–119; that stretch reads TKTD. The G5 stretch occupies residues 146–148; that stretch reads VNI. The 89-residue stretch at 186–274 folds into the KH type-2 domain; the sequence is YRDFILESVY…HLNLQIFVKK (89 aa).

This sequence belongs to the TRAFAC class TrmE-Era-EngA-EngB-Septin-like GTPase superfamily. Era GTPase family. As to quaternary structure, monomer.

Its subcellular location is the cytoplasm. The protein resides in the cell inner membrane. An essential GTPase that binds both GDP and GTP, with rapid nucleotide exchange. Plays a role in 16S rRNA processing and 30S ribosomal subunit biogenesis and possibly also in cell cycle regulation and energy metabolism. The chain is GTPase Era from Campylobacter hominis (strain ATCC BAA-381 / DSM 21671 / CCUG 45161 / LMG 19568 / NCTC 13146 / CH001A).